Consider the following 451-residue polypeptide: Chromosomal replication initiator protein DnaA (451 aa).

The interval 1 to 77 (MTENEQIFWN…EVYNAQISVD (77 aa)) is domain I, interacts with DnaA modulators. The segment at 77 to 110 (DYVFEEDLMIEQNQTKINQKPKQQALNSLPTVTS) is domain II. The interval 111–329 (DLNSKYSFEN…GALKDISLGA (219 aa)) is domain III, AAA+ region. ATP is bound by residues Gly-155, Gly-157, Lys-158, and Thr-159. Residues 330 to 451 (NFKQIDTITV…EIETIKNKIK (122 aa)) form a domain IV, binds dsDNA region.

It belongs to the DnaA family. As to quaternary structure, oligomerizes as a right-handed, spiral filament on DNA at oriC.

It localises to the cytoplasm. Its function is as follows. Plays an essential role in the initiation and regulation of chromosomal replication. ATP-DnaA binds to the origin of replication (oriC) to initiate formation of the DNA replication initiation complex once per cell cycle. Binds the DnaA box (a 9 base pair repeat at the origin) and separates the double-stranded (ds)DNA. Forms a right-handed helical filament on oriC DNA; dsDNA binds to the exterior of the filament while single-stranded (ss)DNA is stabiized in the filament's interior. The ATP-DnaA-oriC complex binds and stabilizes one strand of the AT-rich DNA unwinding element (DUE), permitting loading of DNA polymerase. After initiation quickly degrades to an ADP-DnaA complex that is not apt for DNA replication. Binds acidic phospholipids. The chain is Chromosomal replication initiator protein DnaA from Streptococcus pyogenes serotype M49 (strain NZ131).